The chain runs to 1558 residues: MIKNGTCPYWERDDLSECARREYIEFKFPLFILLTGMIYAFCKVFRAFYLRGKNHTNEAPEFEEQGNGNHEYARFSVLRLKSAWESRSFCNVNNRSTFDKFKKFIEGAFIVLQLTIHLYILSSMPMDNKKFFHQGFLVQMFLWILLLVVITLRLISASQSFRWVLACKRDLWAVSFYSYASLFTLSILPLRSVFIGKIKDKIMVKYIISETFIDLALLLLLSTSSIEGTRYSFLVENENKKLPPAPTVFGLLTFSRIDRLIWKAYKHCLGNADIWDLDINNKSIAILANFEMSSKKGRLLPNIICYFKAVFISQLFLAFVSSFLNFVPSLLMPRILSYVNDPKSKSWNLVSLYVSSMLVSKIIATTCRGQGLFLGEKGTMQLRTVLISNIYSKTLRRTILKDSTTSLQKNASTSFEENPDSSEAEPRKKSSRKDNSVNNVMSIDAFKVSEAMNTFYLACEAVFMTVTALMILYSLLGWSAFAGTFALLAMIPLNFWCATFYGNYQADQLILTDKRTSGISEALNSIRVIKLLAWENLFYQKIINVRDGEIRLLKKKATIFFLNHLIWFFGPTLVSAITFSVFIKFQNQTLTPTIAFTALSLFAILRTPMDQIASTVSLLIQSFISLERIQDYLNESETRKYEILEQSNTKFGFEDASMEWEAAETSFKLKNISIDFKLNSLNAIIGPTGSGKSSLLLGLLGELNLLSGKIYVPTVESRDDLEIGKDGMTNSMAYCSQTPWLISGTIKDNVVFGEIFNKQKFDDVMKSCCLDKDIKAMTAGIRTDVGDGGFSLSGGQQQRIALARAIYSSSRYLILDDCLSAVDPETALYIYEECLCGPMMKGRTCIITSHNISLVTKRADWLVILDRGEVKSQGKPSDLIKSNEFLRESINNDSKNTTHNQIDLKRSTTSKKTKNGDPEGGNSQDEVCAEVENFEETKMEGSVKFSAYKWLADYFGGLGVVFVFTSSSILIHGITLSQGFWLRYWLDTGSSGSKSTWLYRIVEGHSNIYFLLTYIIIGLVSSFLTSGKVWIAIISGTNVTKKIFAKLLSSILYAKLRFHNVTPTGRIMNRFSKDMDIIDQQLIPNFEGLSYSVVVCLWIILLIGYVTPQFLLFAIPLCALYYTVCTLYLRASRELKRIDNINISPIHQLFAEAIKGVTTIRALADERRFITQSLVAIDRSNAPFFYLNMATEWITYRVDIIGTLVLFSSSVMIIMKASYLDAGLAGILLSNAFSFTETAQWIIKVFSSVELLMSSVERIKEYTDIPSESNGYISPPANWPQTGDVELKNLSLRYSPHSSKALDNVSFKVKAGTKVGIVGRTGAGKSSIIAAIYRLSDWENGTITIDNKDIKHIPLERLRNSISCIPQDPTLFDGTVRSNLDPFDRYSDVQIYGVLSKVGLIEECDELCLIFEQEQPNFSSHKLRNRFIDLNTVVKSGGSNLSQGQRQLLCLARSMLGARNIMLIDEATASIDYISDAKIQKTIRETMKNTTILTIAHRLRSVIDYDKILVMEMGRVKEYDHPYTLISDRNTIFYRLCRQSGEFENLFELAKVSFDNKR.

The Extracellular segment spans residues 1 to 29 (MIKNGTCPYWERDDLSECARREYIEFKFP). Asparagine 4 is a glycosylation site (N-linked (GlcNAc...) asparagine). A helical membrane pass occupies residues 30-50 (LFILLTGMIYAFCKVFRAFYL). At 51–103 (RGKNHTNEAPEFEEQGNGNHEYARFSVLRLKSAWESRSFCNVNNRSTFDKFKK) the chain is on the cytoplasmic side. A helical membrane pass occupies residues 104-124 (FIEGAFIVLQLTIHLYILSSM). Topologically, residues 125–130 (PMDNKK) are extracellular. The helical transmembrane segment at 131-151 (FFHQGFLVQMFLWILLLVVIT) threads the bilayer. At 152-169 (LRLISASQSFRWVLACKR) the chain is on the cytoplasmic side. The helical transmembrane segment at 170 to 190 (DLWAVSFYSYASLFTLSILPL) threads the bilayer. Residues 191 to 201 (RSVFIGKIKDK) are Extracellular-facing. The chain crosses the membrane as a helical span at residues 202–222 (IMVKYIISETFIDLALLLLLS). At 223–302 (TSSIEGTRYS…SSKKGRLLPN (80 aa)) the chain is on the cytoplasmic side. The helical transmembrane segment at 303-323 (IICYFKAVFISQLFLAFVSSF) threads the bilayer. In terms of domain architecture, ABC transmembrane type-1 1 spans 311–621 (FISQLFLAFV…IASTVSLLIQ (311 aa)). At 324–351 (LNFVPSLLMPRILSYVNDPKSKSWNLVS) the chain is on the extracellular side. The chain crosses the membrane as a helical span at residues 352-374 (LYVSSMLVSKIIATTCRGQGLFL). Topologically, residues 375-449 (GEKGTMQLRT…VMSIDAFKVS (75 aa)) are cytoplasmic. Residues 410 to 434 (NASTSFEENPDSSEAEPRKKSSRKD) form a disordered region. The span at 424-434 (AEPRKKSSRKD) shows a compositional bias: basic and acidic residues. Residues 450–470 (EAMNTFYLACEAVFMTVTALM) traverse the membrane as a helical segment. Residues 471–481 (ILYSLLGWSAF) lie on the Extracellular side of the membrane. A helical membrane pass occupies residues 482-504 (AGTFALLAMIPLNFWCATFYGNY). Over 505–558 (QADQLILTDKRTSGISEALNSIRVIKLLAWENLFYQKIINVRDGEIRLLKKKAT) the chain is Cytoplasmic. A helical membrane pass occupies residues 559–579 (IFFLNHLIWFFGPTLVSAITF). The Extracellular segment spans residues 580 to 584 (SVFIK). A helical membrane pass occupies residues 585-605 (FQNQTLTPTIAFTALSLFAIL). Residues 606-953 (RTPMDQIAST…KFSAYKWLAD (348 aa)) lie on the Cytoplasmic side of the membrane. One can recognise an ABC transporter 1 domain in the interval 651–892 (FGFEDASMEW…NEFLRESINN (242 aa)). An ATP-binding site is contributed by 686–693 (GPTGSGKS). Over residues 892–901 (NDSKNTTHNQ) the composition is skewed to polar residues. The disordered stretch occupies residues 892-926 (NDSKNTTHNQIDLKRSTTSKKTKNGDPEGGNSQDE). A helical membrane pass occupies residues 954 to 974 (YFGGLGVVFVFTSSSILIHGI). Positions 961-1251 (VFVFTSSSIL…IIKVFSSVEL (291 aa)) constitute an ABC transmembrane type-1 2 domain. The Extracellular portion of the chain corresponds to 975–1013 (TLSQGFWLRYWLDTGSSGSKSTWLYRIVEGHSNIYFLLT). The helical transmembrane segment at 1014–1034 (YIIIGLVSSFLTSGKVWIAII) threads the bilayer. At 1035-1082 (SGTNVTKKIFAKLLSSILYAKLRFHNVTPTGRIMNRFSKDMDIIDQQL) the chain is on the cytoplasmic side. The helical transmembrane segment at 1083–1105 (IPNFEGLSYSVVVCLWIILLIGY) threads the bilayer. At 1106 to 1109 (VTPQ) the chain is on the extracellular side. The chain crosses the membrane as a helical span at residues 1110-1132 (FLLFAIPLCALYYTVCTLYLRAS). The Cytoplasmic segment spans residues 1133–1199 (RELKRIDNIN…ATEWITYRVD (67 aa)). Residues 1200 to 1220 (IIGTLVLFSSSVMIIMKASYL) traverse the membrane as a helical segment. The Extracellular segment spans residues 1221–1222 (DA). Residues 1223-1243 (GLAGILLSNAFSFTETAQWII) form a helical membrane-spanning segment. Residues 1244–1558 (KVFSSVELLM…LAKVSFDNKR (315 aa)) lie on the Cytoplasmic side of the membrane. Positions 1285 to 1538 (VELKNLSLRY…RNTIFYRLCR (254 aa)) constitute an ABC transporter 2 domain. Residue 1319–1326 (GRTGAGKS) coordinates ATP.

It belongs to the ABC transporter superfamily. ABCC family. Conjugate transporter (TC 3.A.1.208) subfamily.

The protein resides in the membrane. The polypeptide is ABC transporter NFT1 (NFT1) (Saccharomyces cerevisiae (Baker's yeast)).